Consider the following 295-residue polypeptide: ATP synthase gamma chain (295 aa).

This sequence belongs to the ATPase gamma chain family. F-type ATPases have 2 components, CF(1) - the catalytic core - and CF(0) - the membrane proton channel. CF(1) has five subunits: alpha(3), beta(3), gamma(1), delta(1), epsilon(1). CF(0) has three main subunits: a, b and c.

Its subcellular location is the cell inner membrane. Its function is as follows. Produces ATP from ADP in the presence of a proton gradient across the membrane. The gamma chain is believed to be important in regulating ATPase activity and the flow of protons through the CF(0) complex. This chain is ATP synthase gamma chain, found in Campylobacter fetus subsp. fetus (strain 82-40).